Here is a 282-residue protein sequence, read N- to C-terminus: MSEQTVYGAASDQPTPKPRVKVRTTHLQKWKAEGHKWAMLTAYDFSTARAFDDAGIPVLLVGDSAANVVYGYDTTVPITIDELIPLVRGVVRGAPHALVVADLPFGSYEEGPRQALATATRFLKETGAHAVKLEGGERVAEQIATLSAAGIPVMAHIGFTPQSVNGLGGFKVQGRGDAAEQTIHDAIAVQEAGAFSVVMEMVPAELATQITGKLTIPTVGIGAGPNCDAQVLVWQDMAGLTSGRTAKFVKRFGDVGAELRRAASQYADEVAAGVFPAEEHSF.

Residues aspartate 63 and aspartate 102 each coordinate Mg(2+). 3-methyl-2-oxobutanoate is bound by residues 63–64, aspartate 102, and lysine 132; that span reads DS. Glutamate 134 provides a ligand contact to Mg(2+). The active-site Proton acceptor is glutamate 200.

Belongs to the PanB family. Homodecamer; pentamer of dimers. Mg(2+) serves as cofactor.

The protein resides in the cytoplasm. The enzyme catalyses 3-methyl-2-oxobutanoate + (6R)-5,10-methylene-5,6,7,8-tetrahydrofolate + H2O = 2-dehydropantoate + (6S)-5,6,7,8-tetrahydrofolate. Its pathway is cofactor biosynthesis; (R)-pantothenate biosynthesis; (R)-pantoate from 3-methyl-2-oxobutanoate: step 1/2. Catalyzes the reversible reaction in which hydroxymethyl group from 5,10-methylenetetrahydrofolate is transferred onto alpha-ketoisovalerate to form ketopantoate. The chain is 3-methyl-2-oxobutanoate hydroxymethyltransferase from Mycobacterium sp. (strain JLS).